Here is a 693-residue protein sequence, read N- to C-terminus: Heat shock protein homolog SSE1 (693 aa).

Ser2 is subject to N-acetylserine. Lys195 participates in a covalent cross-link: Glycyl lysine isopeptide (Lys-Gly) (interchain with G-Cter in ubiquitin). Thr242 carries the post-translational modification Phosphothreonine. The disordered stretch occupies residues 653-693; that stretch reads IRSKQEASQMAAMAEKLAAQRKAEAEKKEEKKDTEGDVDMD. Ser660 is subject to Phosphoserine. The segment covering 673 to 687 has biased composition (basic and acidic residues); the sequence is RKAEAEKKEEKKDTE.

It belongs to the heat shock protein 70 family.

The protein resides in the cytoplasm. In terms of biological role, has a calcium-dependent calmodulin-binding activity. Required for normal growth at various temperatures. The polypeptide is Heat shock protein homolog SSE1 (SSE1) (Saccharomyces cerevisiae (strain ATCC 204508 / S288c) (Baker's yeast)).